The chain runs to 487 residues: MLMQTEIIAQLVLILPEILIALGIMALLLIGVYSGAHSYLTVTGLTIALLFATIILIVLFPKDGFFYTNALIIDAFSRYMKILTLIGALFSLILSVGFSSSQKFDIFEFPILVLLATLGMMLMISSGNMLSLYMGLELQSLALYVLAAIHRDNVKSSEAGIKYFVLGALSSGLLLYGISLLYGFTGQIGFREISSALNGNILHLGVIFGIVFILAGLAFKISAVPFHMWTPDVYEGAPTPITAFFAGAPKIAAMALIIRVIVFAFIPLESSDNFMPAWQQILIFMAISSMALGAFAAIGQTNIKRLMAYSSIGHMGYALVGLAAGNILGVKGILIYMTIYLGMTIGSFAFILGMRFSNRYVENIYDLAGLVKTNPFMAIVMTIQLFSLASIPPMAGFFGKWYTFSAAVRAGLVPLAIVGMVLSVIGAFYYLRIIKIMWFDDAKDSFVILSNEIKLCLCLSALFVLFYVFFGFWFSEFAEKAATSLFQ.

A run of 14 helical transmembrane segments spans residues 12 to 32 (VLIL…LIGV), 40 to 60 (LTVT…IVLF), 79 to 99 (YMKI…VGFS), 104 to 124 (FDIF…MLMI), 129 to 149 (MLSL…LAAI), 164 to 184 (FVLG…LYGF), 201 to 221 (ILHL…AFKI), 248 to 268 (APKI…FIPL), 281 to 301 (ILIF…IGQT), 310 to 330 (SSIG…ILGV), 332 to 352 (GILI…AFIL), 378 to 398 (AIVM…AGFF), 411 to 431 (GLVP…FYYL), and 455 to 475 (LCLC…FWFS).

The protein belongs to the complex I subunit 2 family. In terms of assembly, NDH-1 is composed of 14 different subunits. Subunits NuoA, H, J, K, L, M, N constitute the membrane sector of the complex.

The protein resides in the cell inner membrane. The enzyme catalyses a quinone + NADH + 5 H(+)(in) = a quinol + NAD(+) + 4 H(+)(out). Its function is as follows. NDH-1 shuttles electrons from NADH, via FMN and iron-sulfur (Fe-S) centers, to quinones in the respiratory chain. The immediate electron acceptor for the enzyme in this species is believed to be ubiquinone. Couples the redox reaction to proton translocation (for every two electrons transferred, four hydrogen ions are translocated across the cytoplasmic membrane), and thus conserves the redox energy in a proton gradient. This Bartonella bacilliformis (strain ATCC 35685 / KC583 / Herrer 020/F12,63) protein is NADH-quinone oxidoreductase subunit N.